We begin with the raw amino-acid sequence, 456 residues long: GTP cyclohydrolase 1 (456 aa).

Zn(2+)-binding residues include Cys340, His343, and Cys412.

Belongs to the GTP cyclohydrolase I family. As to quaternary structure, homodimer. As to expression, expressed in leaves and unripe fruits.

It carries out the reaction GTP + H2O = 7,8-dihydroneopterin 3'-triphosphate + formate + H(+). Its pathway is cofactor biosynthesis; 7,8-dihydroneopterin triphosphate biosynthesis; 7,8-dihydroneopterin triphosphate from GTP: step 1/1. Its function is as follows. GTP cyclohydrolase 1 is the first enzyme in the biosynthetic pathway leading to folic acid. The polypeptide is GTP cyclohydrolase 1 (GCH1) (Solanum lycopersicum (Tomato)).